Here is a 982-residue protein sequence, read N- to C-terminus: Chromosome partition protein Smc (982 aa).

33-40 (PNGSGKSN) contributes to the ATP binding site. 3 coiled-coil regions span residues 171-231 (RYTK…ELAV), 280-310 (SADMQSNELQKELQDIYQKINELEQRKVIID), and 337-377 (QTQL…QIEK). Residues 416–535 (TGILNTLGTF…AKDLNSAINL (120 aa)) enclose the SMC hinge domain. 2 coiled-coil regions span residues 575-718 (SASL…SARE) and 753-822 (VKLS…IASN).

The protein belongs to the SMC family. As to quaternary structure, homodimer.

The protein resides in the cytoplasm. Its function is as follows. Required for chromosome condensation and partitioning. This Mycoplasma genitalium (strain ATCC 33530 / DSM 19775 / NCTC 10195 / G37) (Mycoplasmoides genitalium) protein is Chromosome partition protein Smc.